The following is a 416-amino-acid chain: Lysosome-associated membrane glycoprotein 3 (416 aa).

A signal peptide spans 1–27 (MPRQLSAAAALFASLAVILHDGSQMRA). The Lumenal segment spans residues 28-381 (KAFPETRDYS…NVDECSSDYT (354 aa)). Asparagine 112, asparagine 158, asparagine 164, asparagine 200, asparagine 232, asparagine 266, and asparagine 291 each carry an N-linked (GlcNAc...) asparagine glycan. Disordered stretches follow at residues 136–167 (PTITPPAHTTGTSSSTVSHTTGNTTQPSNQTT) and 179–219 (STTG…LAPQ). Low complexity predominate over residues 143–160 (HTTGTSSSTVSHTTGNTT). A compositionally biased stretch (low complexity) spans 188-208 (PTHAPGTTAAAHNTTRTAAPA). The cysteines at positions 237 and 274 are disulfide-linked. Cysteine 339 and cysteine 376 are oxidised to a cystine. The helical transmembrane segment at 382–402 (IVLPVIGAIVVGLCLMGMGVY) threads the bilayer. Topologically, residues 403–416 (KIRLRCQSSGYQRI) are cytoplasmic.

Belongs to the LAMP family. As to quaternary structure, monomer. Interacts with FURIN. (Microbial infection) Interacts with mumps virus protein F; this interaction promotes protein F cleavage by FURIN. As to expression, detected in tonsil interdigitating dendritic cells, in spleen, lymph node, Peyer's patches in the small instestine, in thymus medulla and in B-cells (at protein level). Expressed in lymphoid organs and dendritic cells. Expressed in lung. Up-regulated in carcinomas of the esophagus, colon, rectum, ureter, stomach, breast, fallopian tube, thyroid and parotid tissues.

It localises to the cell surface. It is found in the lysosome membrane. The protein localises to the cytoplasmic vesicle membrane. The protein resides in the early endosome membrane. In terms of biological role, lysosomal membrane glycoprotein which plays a role in the unfolded protein response (UPR) that contributes to protein degradation and cell survival during proteasomal dysfunction. Plays a role in the process of fusion of the lysosome with the autophagosome, thereby modulating the autophagic process. Promotes hepatocellular lipogenesis through activation of the PI3K/Akt pathway. May also play a role in dendritic cell function and in adaptive immunity. Its function is as follows. (Microbial infection) Plays a positive role in post-entry steps of influenza A virus replication, either virus uncoating, cytosolic transport, or nuclear import of viral components, and promotes nuclear accumulation of influenza nucleoprotein/NP at early stages of viral infection. (Microbial infection) Supports the FURIN-mediated cleavage of mumps virus fusion protein F by interacting with both FURIN and the unprocessed form but not the processed form of the viral protein F. Functionally, (Microbial infection) Promotes the intracellular proliferation of Salmonella typhimuium. The protein is Lysosome-associated membrane glycoprotein 3 (LAMP3) of Homo sapiens (Human).